We begin with the raw amino-acid sequence, 77 residues long: Putative antitoxin MazE7 (77 aa).

The segment at 49–77 (REASHAETTTQAVRDEDREWEGTVGDGLG) is disordered.

Forms a complex with cognate toxin MazF7.

In terms of biological role, antitoxin component of a type II toxin-antitoxin (TA) system. In Mycobacterium tuberculosis (strain CDC 1551 / Oshkosh), this protein is Putative antitoxin MazE7 (mazE7).